Here is a 341-residue protein sequence, read N- to C-terminus: L-threonine 3-dehydrogenase (341 aa).

Cys-38 contributes to the Zn(2+) binding site. Active-site charge relay system residues include Thr-40 and His-43. His-63, Glu-64, Cys-93, Cys-96, Cys-99, and Cys-107 together coordinate Zn(2+). NAD(+)-binding positions include Ile-175, Asp-195, Arg-200, 262–264, and 286–287; these read LGI and IY.

It belongs to the zinc-containing alcohol dehydrogenase family. As to quaternary structure, homotetramer. The cofactor is Zn(2+).

It localises to the cytoplasm. It carries out the reaction L-threonine + NAD(+) = (2S)-2-amino-3-oxobutanoate + NADH + H(+). The protein operates within amino-acid degradation; L-threonine degradation via oxydo-reductase pathway; glycine from L-threonine: step 1/2. Its function is as follows. Catalyzes the NAD(+)-dependent oxidation of L-threonine to 2-amino-3-ketobutyrate. This chain is L-threonine 3-dehydrogenase, found in Escherichia fergusonii (strain ATCC 35469 / DSM 13698 / CCUG 18766 / IAM 14443 / JCM 21226 / LMG 7866 / NBRC 102419 / NCTC 12128 / CDC 0568-73).